Here is a 206-residue protein sequence, read N- to C-terminus: dTTP/UTP pyrophosphatase (206 aa).

D87 functions as the Proton acceptor in the catalytic mechanism.

Belongs to the Maf family. YhdE subfamily. Requires a divalent metal cation as cofactor.

The protein localises to the cytoplasm. It carries out the reaction dTTP + H2O = dTMP + diphosphate + H(+). It catalyses the reaction UTP + H2O = UMP + diphosphate + H(+). Nucleoside triphosphate pyrophosphatase that hydrolyzes dTTP and UTP. May have a dual role in cell division arrest and in preventing the incorporation of modified nucleotides into cellular nucleic acids. The sequence is that of dTTP/UTP pyrophosphatase from Aromatoleum aromaticum (strain DSM 19018 / LMG 30748 / EbN1) (Azoarcus sp. (strain EbN1)).